We begin with the raw amino-acid sequence, 430 residues long: Adenylosuccinate synthetase (430 aa).

Residues 12-18 (GDEGKGK) and 40-42 (GHT) contribute to the GTP site. Aspartate 13 acts as the Proton acceptor in catalysis. The Mg(2+) site is built by aspartate 13 and glycine 40. IMP is bound by residues 13-16 (DEGK), 38-41 (NAGH), threonine 130, arginine 144, glutamine 224, threonine 239, and arginine 303. Catalysis depends on histidine 41, which acts as the Proton donor. Substrate is bound at residue 299–305 (TNTGRAR). Residues arginine 305, 331–333 (KLD), and 413–415 (STS) each bind GTP.

It belongs to the adenylosuccinate synthetase family. In terms of assembly, homodimer. Mg(2+) serves as cofactor.

Its subcellular location is the cytoplasm. The catalysed reaction is IMP + L-aspartate + GTP = N(6)-(1,2-dicarboxyethyl)-AMP + GDP + phosphate + 2 H(+). It functions in the pathway purine metabolism; AMP biosynthesis via de novo pathway; AMP from IMP: step 1/2. Its function is as follows. Plays an important role in the de novo pathway of purine nucleotide biosynthesis. Catalyzes the first committed step in the biosynthesis of AMP from IMP. In Hyphomonas neptunium (strain ATCC 15444), this protein is Adenylosuccinate synthetase.